A 243-amino-acid chain; its full sequence is Protein GID8 homolog (243 aa).

The LisH domain maps to 40–72 (RKEDMNTLVMNFLVTEGYVEAAEKFQRESGTKP). The CTLH domain maps to 78–135 (TITDRMAVKKAVQNGNVEDAIEKVNDLNPEILDTNPELFFHLQQQRLIELIRQGKTEE).

This sequence belongs to the GID8 family. In terms of assembly, interacts with RANBPM.

Its subcellular location is the cytoplasm. The polypeptide is Protein GID8 homolog (Arabidopsis thaliana (Mouse-ear cress)).